The sequence spans 381 residues: E3 ubiquitin-protein ligase RNF13 (381 aa).

The N-terminal stretch at methionine 1–alanine 34 is a signal peptide. Residues aspartate 35–tyrosine 182 are Lumenal-facing. The region spanning leucine 64–aspartate 160 is the PA domain. A glycan (N-linked (GlcNAc...) asparagine) is linked at asparagine 88. A helical membrane pass occupies residues tyrosine 183–isoleucine 203. The Cytoplasmic segment spans residues threonine 204–valine 381. Residues cysteine 240 to lysine 282 form an RING-type; atypical zinc finger. The segment at valine 285–valine 381 is disordered. A compositionally biased stretch (polar residues) spans serine 317–glutamate 328. Positions serine 339–glutamate 357 are enriched in acidic residues. Polar residues predominate over residues valine 365–valine 381.

Interacts with ERN1. Post-translationally, autoubiquitinated. N-glycosylated and also modified with chondroitin sulfate. In terms of tissue distribution, expressed in the brain, heart, kidney, liver and spleen. Higher expression in adult tissues compared to the embryonic counterparts.

The protein resides in the endoplasmic reticulum membrane. Its subcellular location is the late endosome membrane. The protein localises to the lysosome membrane. It localises to the nucleus inner membrane. The catalysed reaction is S-ubiquitinyl-[E2 ubiquitin-conjugating enzyme]-L-cysteine + [acceptor protein]-L-lysine = [E2 ubiquitin-conjugating enzyme]-L-cysteine + N(6)-ubiquitinyl-[acceptor protein]-L-lysine.. The protein operates within protein modification; protein ubiquitination. Functionally, E3 ubiquitin-protein ligase that regulates cell proliferation. Involved in apoptosis regulation. Mediates ER stress-induced activation of JNK signaling pathway and apoptosis by promoting ERN1 activation and splicing of XBP1 mRNA. Also involved in protein trafficking and localization. The sequence is that of E3 ubiquitin-protein ligase RNF13 (Rnf13) from Mus musculus (Mouse).